Here is a 93-residue protein sequence, read N- to C-terminus: MAQGQRKFQAQKPKSKAAAAERSRGPRKGGRVIGPKKARVVQQQKLKKSLEVGIRKKIEHDVVMKASSSLPKKLALLKGASKKTGATPGKTPS.

The segment at 1–41 (MAQGQRKFQAQKPKSKAAAAERSRGPRKGGRVIGPKKARVV) is disordered. A compositionally biased stretch (low complexity) spans 7 to 18 (KFQAQKPKSKAA). The segment covering 25-39 (GPRKGGRVIGPKKAR) has biased composition (basic residues).

This sequence belongs to the UPF0390 family. In terms of tissue distribution, leydig cell tumor, testis and placenta.

May have a potential role in hypercalcemia of malignancy. This Rattus norvegicus (Rat) protein is Leydig cell tumor 10 kDa protein.